Reading from the N-terminus, the 561-residue chain is Potassium-transporting ATPase potassium-binding subunit (561 aa).

12 consecutive transmembrane segments (helical) span residues 2–22 (GLGL…TPVL), 65–85 (YIRA…SLIH), 135–155 (ALGF…IAFI), 177–197 (ILLP…VPQT), 253–273 (FIET…YGVF), 280–300 (AWLL…VAAT), 327–347 (FGWA…CGAV), 353–373 (ALMP…IIWG), 378–398 (GTAY…LMVG), 413–433 (IVLA…PSAI), 482–502 (LSTS…MLLL), and 531–551 (AGIV…LGPI).

It belongs to the KdpA family. In terms of assembly, the system is composed of three essential subunits: KdpA, KdpB and KdpC.

It is found in the cell membrane. Its function is as follows. Part of the high-affinity ATP-driven potassium transport (or Kdp) system, which catalyzes the hydrolysis of ATP coupled with the electrogenic transport of potassium into the cytoplasm. This subunit binds the extracellular potassium ions and delivers the ions to the membrane domain of KdpB through an intramembrane tunnel. The polypeptide is Potassium-transporting ATPase potassium-binding subunit (Anabaena sp. (strain L31)).